The primary structure comprises 542 residues: Glucans biosynthesis protein G (542 aa).

An N-terminal signal peptide occupies residues 1 to 34 (MVSLLRCPSSKPYSSLICSLTLGAVVALSGVAYA).

This sequence belongs to the OpgD/OpgG family.

The protein resides in the periplasm. The protein operates within glycan metabolism; osmoregulated periplasmic glucan (OPG) biosynthesis. Involved in the biosynthesis of osmoregulated periplasmic glucans (OPGs). The polypeptide is Glucans biosynthesis protein G (Shewanella baltica (strain OS155 / ATCC BAA-1091)).